We begin with the raw amino-acid sequence, 213 residues long: Imidazole glycerol phosphate synthase subunit HisH (213 aa).

Residues 4 to 211 enclose the Glutamine amidotransferase type-1 domain; it reads NLGVIDYGMG…LHWLHQGAEP (208 aa). The active-site Nucleophile is the C82. Active-site residues include H186 and E188.

Heterodimer of HisH and HisF.

It is found in the cytoplasm. It carries out the reaction 5-[(5-phospho-1-deoxy-D-ribulos-1-ylimino)methylamino]-1-(5-phospho-beta-D-ribosyl)imidazole-4-carboxamide + L-glutamine = D-erythro-1-(imidazol-4-yl)glycerol 3-phosphate + 5-amino-1-(5-phospho-beta-D-ribosyl)imidazole-4-carboxamide + L-glutamate + H(+). It catalyses the reaction L-glutamine + H2O = L-glutamate + NH4(+). It functions in the pathway amino-acid biosynthesis; L-histidine biosynthesis; L-histidine from 5-phospho-alpha-D-ribose 1-diphosphate: step 5/9. Its function is as follows. IGPS catalyzes the conversion of PRFAR and glutamine to IGP, AICAR and glutamate. The HisH subunit catalyzes the hydrolysis of glutamine to glutamate and ammonia as part of the synthesis of IGP and AICAR. The resulting ammonia molecule is channeled to the active site of HisF. The sequence is that of Imidazole glycerol phosphate synthase subunit HisH from Synechococcus sp. (strain CC9902).